A 745-amino-acid polypeptide reads, in one-letter code: Cullin-2 (745 aa).

At Lys393 the chain carries N6-acetyllysine. Thr661 is subject to Phosphothreonine. One can recognise a Cullin neddylation domain in the interval Asp675–Gln735. Lys689 participates in a covalent cross-link: Glycyl lysine isopeptide (Lys-Gly) (interchain with G-Cter in NEDD8).

This sequence belongs to the cullin family. Component of multiple Cul2-RING (CRL2) E3 ubiquitin-protein ligase complexes consisting of CUL2, Elongin BC (ELOB and ELOC), RBX1 and a variable substrate-specific adapter; this complex is also known as ECS (Elongin BC-CUL2/5-SOCS-box protein) complex and may consist of CUL2 or CUL5. Component of the ECS(VHL) or CBC(VHL) complex containing CUL2, RBX1, ELOB, ELOC and VHL. Component of the ECS(MED8) complex with the probable substrate recognition component MED8. Component of multiple ECS complexes part of the DesCEND (destruction via C-end degrons) pathway, which contain either KLHDC2, KLHDC3, KLHDC10, APPBP2, FEM1A, FEM1B or FEM1C as substrate-recognition component. Component of the ECS(LRR1) complex with the substrate recognition component LRR1. Component of a CRL2(FEM1B) complex containing CUL2, RBX1, ELOB, ELOC and FEM1B. Component of a CRL2(FEM1C) complex containing CUL2, RBX1, ELOB, ELOC and FEM1C. Part of an E3 ubiquitin-protein ligase complex including ZYG11B, CUL2 and Elongin BC. Part of an E3 ubiquitin-protein ligase complex including ZER1, CUL2 and Elongin BC. Interacts with RBX1, RNF7, FEM1B and TIP120A/CAND1. Found in a complex composed of LIMD1, VHL, EGLN1/PHD2, ELOB and CUL2. Interacts (when neddylated) with ARIH1; leading to activate the E3 ligase activity of ARIH1. Interacts (unneddylated form) with DCUN1D1, DCUN1D2, DCUN1D3, DCUN1D4 and DCUN1D5; these interactions promote the cullin neddylation. Component of VCB (elongins BC/CUL2/VHL) complex that contains at least DCUN1D1, CUL2 and VHL; this complex triggers CUL2 neddylation and consequently cullin ring ligase (CRL) substrates polyubiquitylation. In terms of processing, neddylated; which enhances the ubiquitination activity of ECS (Elongin BC-CUL2/5-SOCS-box protein) E3 ubiquitin-protein ligase complexes. Neddylation leads to structural rearrangment in the complex that allows interaction between the E2 ubiquitin-conjugating enzyme and the acceptor ubiquitin. CBC(VHL) complex formation seems to promote neddylation. Deneddylated via its interaction with the COP9 signalosome (CSN) complex.

It localises to the nucleus. Its pathway is protein modification; protein ubiquitination. Its function is as follows. Core component of multiple cullin-RING-based ECS (ElonginB/C-CUL2/5-SOCS-box protein) E3 ubiquitin-protein ligase complexes, which mediate the ubiquitination of target proteins. CUL2 may serve as a rigid scaffold in the complex and may contribute to catalysis through positioning of the substrate and the ubiquitin-conjugating enzyme. The E3 ubiquitin-protein ligase activity of the complex is dependent on the neddylation of the cullin subunit and is inhibited by the association of the deneddylated cullin subunit with TIP120A/CAND1. The functional specificity of the ECS complex depends on the substrate recognition component. ECS(VHL) mediates the ubiquitination of hypoxia-inducible factor (HIF). A number of ECS complexes (containing either KLHDC2, KLHDC3, KLHDC10, APPBP2, FEM1A, FEM1B or FEM1C as substrate-recognition component) are part of the DesCEND (destruction via C-end degrons) pathway, which recognizes a C-degron located at the extreme C terminus of target proteins, leading to their ubiquitination and degradation. ECS complexes and ARIH1 collaborate in tandem to mediate ubiquitination of target proteins. ECS(LRR1) ubiquitinates MCM7 and promotes CMG replisome disassembly by VCP and chromatin extraction during S-phase. This chain is Cullin-2 (CUL2), found in Pongo abelii (Sumatran orangutan).